We begin with the raw amino-acid sequence, 502 residues long: Cytochrome P450 71B20 (502 aa).

A helical membrane pass occupies residues 1–21 (MAISFLCFCLITLASLIFFAK). Cys444 is a heme binding site.

The protein belongs to the cytochrome P450 family. Heme serves as cofactor.

It is found in the membrane. The chain is Cytochrome P450 71B20 (CYP71B20) from Arabidopsis thaliana (Mouse-ear cress).